A 486-amino-acid chain; its full sequence is G2/mitotic-specific cyclin-4 (486 aa).

Disordered stretches follow at residues 1 to 80 (MRSY…SSNK) and 105 to 126 (VLLN…DKEN). Residues 25 to 41 (ANLSSNHTTAGQPSTSS) show a composition bias toward polar residues. Positions 108–123 (NDDDDETDDEFDDEED) are enriched in acidic residues. Residues 122-184 (EDKENRYHDL…QSHTQDMRSI (63 aa)) adopt a coiled-coil conformation. A Cyclin N-terminal domain is found at 234 to 359 (EIFNYLHELE…FMIDVLEFDL (126 aa)).

The protein belongs to the cyclin family. Cyclin AB subfamily. Interacts with IQG1.

In terms of biological role, 2/mitotic-specific cyclin essential for the control of the cell cycle at the G2/M (mitosis) transition. G2/M cyclins accumulate steadily during G2 and are abruptly destroyed at mitosis. Degradation is necessary for the cell to exit from mitosis. Plays a role in morphogenesis by negatively regulating polarized growth. Through binding to CDC28 regulates cytokinesis, partly by phosphorylation of the actomyosin ring component IQG1. This chain is G2/mitotic-specific cyclin-4 (CLB4), found in Candida albicans (strain SC5314 / ATCC MYA-2876) (Yeast).